We begin with the raw amino-acid sequence, 571 residues long: uncharacterized protein (571 aa).

Transmembrane regions (helical) follow at residues 10–29 (VRLHPELALFAAIVFGHFIG), 36–55 (VSLGTVVGTLIAGMILGLLF), 65–87 (WAFFDLFLFAVGYSAGPQFFASL), 96–118 (ALAVVVSCTGLAAAIAMVALFRF), and 166–188 (ATTYIFGEVGLILFVTVVAPRLL). Positions 294–378 (TEVDDQELLS…IATAARNLGF (85 aa)) constitute an RCK C-terminal domain. Helical transmembrane passes span 388–406 (LVYLAGGVVVGILFGLLQV), 411–433 (VPLGLGTSGGVLVVGLVAGWLYS), 446–465 (LRLLSDVGLIVFIAAIGLAA), 480–502 (LFAKLVGAGVVVTLAGPIAGLLL), 509–531 (LPPVALLPGIAGAQTTVATLNAL), and 546–568 (VPFAVSNVLITLWGPVIVACAVA).

Belongs to the AAE transporter (TC 2.A.81) family.

It is found in the cell membrane. This is an uncharacterized protein from Bordetella parapertussis (strain 12822 / ATCC BAA-587 / NCTC 13253).